The chain runs to 197 residues: Nucleoid occlusion factor SlmA (197 aa).

One can recognise an HTH tetR-type domain in the interval 7–67 (INRREHILQC…GLIDFIEESL (61 aa)). The H-T-H motif DNA-binding region spans 30–49 (TTAKLAAEVGVSEAALYRHF).

This sequence belongs to the nucleoid occlusion factor SlmA family. In terms of assembly, homodimer. Interacts with FtsZ.

The protein resides in the cytoplasm. It localises to the nucleoid. Its function is as follows. Required for nucleoid occlusion (NO) phenomenon, which prevents Z-ring formation and cell division over the nucleoid. Acts as a DNA-associated cell division inhibitor that binds simultaneously chromosomal DNA and FtsZ, and disrupts the assembly of FtsZ polymers. SlmA-DNA-binding sequences (SBS) are dispersed on non-Ter regions of the chromosome, preventing FtsZ polymerization at these regions. The polypeptide is Nucleoid occlusion factor SlmA (Shewanella woodyi (strain ATCC 51908 / MS32)).